The primary structure comprises 718 residues: Polyribonucleotide nucleotidyltransferase (718 aa).

Mg(2+) is bound by residues aspartate 491 and aspartate 497. The region spanning 558-617 is the KH domain; that stretch reads PRMLTIKINPEKIRDVIGKGGATIRALTEETGTQIDISDDGTIVIASVDEGQAKEAQRRI. In terms of domain architecture, S1 motif spans 627-695; it reads GQVYDGSVLR…EKGRLRLSVK (69 aa).

Belongs to the polyribonucleotide nucleotidyltransferase family. It depends on Mg(2+) as a cofactor.

Its subcellular location is the cytoplasm. It catalyses the reaction RNA(n+1) + phosphate = RNA(n) + a ribonucleoside 5'-diphosphate. Involved in mRNA degradation. Catalyzes the phosphorolysis of single-stranded polyribonucleotides processively in the 3'- to 5'-direction. The chain is Polyribonucleotide nucleotidyltransferase from Bordetella avium (strain 197N).